Reading from the N-terminus, the 359-residue chain is Glycerol-3-phosphate dehydrogenase [NAD(P)+] (359 aa).

NADPH contacts are provided by threonine 11, tryptophan 12, arginine 32, and lysine 107. Lysine 107 and glycine 138 together coordinate sn-glycerol 3-phosphate. Alanine 142 lines the NADPH pocket. Sn-glycerol 3-phosphate contacts are provided by lysine 193, aspartate 246, serine 256, arginine 257, and asparagine 258. The active-site Proton acceptor is lysine 193. Arginine 257 is a binding site for NADPH. Residues valine 281 and glutamate 283 each coordinate NADPH.

Belongs to the NAD-dependent glycerol-3-phosphate dehydrogenase family.

The protein localises to the cytoplasm. It carries out the reaction sn-glycerol 3-phosphate + NAD(+) = dihydroxyacetone phosphate + NADH + H(+). The catalysed reaction is sn-glycerol 3-phosphate + NADP(+) = dihydroxyacetone phosphate + NADPH + H(+). The protein operates within membrane lipid metabolism; glycerophospholipid metabolism. Functionally, catalyzes the reduction of the glycolytic intermediate dihydroxyacetone phosphate (DHAP) to sn-glycerol 3-phosphate (G3P), the key precursor for phospholipid synthesis. This Dehalococcoides mccartyi (strain CBDB1) protein is Glycerol-3-phosphate dehydrogenase [NAD(P)+].